The primary structure comprises 723 residues: UPF0313 protein YgiQ (723 aa).

Residues 372 to 650 (AYEMIRFSIN…KALLRYHDPA (279 aa)) form the Radical SAM core domain. Positions 386, 390, and 393 each coordinate [4Fe-4S] cluster. Residues 686–723 (EARRQNRNTRPALTKHTPVEHQRQGLAANKKRGKGAGR) form a disordered region. Residues 714 to 723 (NKKRGKGAGR) show a composition bias toward basic residues.

This sequence belongs to the UPF0313 family. [4Fe-4S] cluster serves as cofactor.

This Salmonella typhimurium (strain LT2 / SGSC1412 / ATCC 700720) protein is UPF0313 protein YgiQ.